A 199-amino-acid chain; its full sequence is 3-isopropylmalate dehydratase small subunit (199 aa).

This sequence belongs to the LeuD family. LeuD type 1 subfamily. As to quaternary structure, heterodimer of LeuC and LeuD.

It carries out the reaction (2R,3S)-3-isopropylmalate = (2S)-2-isopropylmalate. It functions in the pathway amino-acid biosynthesis; L-leucine biosynthesis; L-leucine from 3-methyl-2-oxobutanoate: step 2/4. Its function is as follows. Catalyzes the isomerization between 2-isopropylmalate and 3-isopropylmalate, via the formation of 2-isopropylmaleate. This Bacillus velezensis (strain DSM 23117 / BGSC 10A6 / LMG 26770 / FZB42) (Bacillus amyloliquefaciens subsp. plantarum) protein is 3-isopropylmalate dehydratase small subunit.